We begin with the raw amino-acid sequence, 153 residues long: Large ribosomal subunit protein uL30 (153 aa).

This sequence belongs to the universal ribosomal protein uL30 family. Part of the 50S ribosomal subunit.

This Methanosarcina mazei (strain ATCC BAA-159 / DSM 3647 / Goe1 / Go1 / JCM 11833 / OCM 88) (Methanosarcina frisia) protein is Large ribosomal subunit protein uL30.